A 1052-amino-acid polypeptide reads, in one-letter code: Membrane-bound transcription factor site-1 protease (1052 aa).

An N-terminal signal peptide occupies residues 1-17 (MKLINIWLLLLVVLLCG). Residues 18–186 (KKHLGDRLGK…TGRHSSRRLL (169 aa)) constitute a propeptide that is removed on maturation. A glycan (N-linked (GlcNAc...) asparagine) is linked at Asn-148. Ser-168 is subject to Phosphoserine. Residues 187 to 999 (RAIPRQVAQT…MPGRYNQEVG (813 aa)) are Lumenal-facing. A Peptidase S8 domain is found at 190–472 (PRQVAQTLQA…HGKLDLLRAY (283 aa)). Asp-218 (charge relay system) is an active-site residue. Asn-236 carries N-linked (GlcNAc...) asparagine glycosylation. The active-site Charge relay system is the His-249. Asn-305 carries N-linked (GlcNAc...) asparagine glycosylation. Ser-414 (charge relay system) is an active-site residue. N-linked (GlcNAc...) asparagine glycosylation is found at Asn-515 and Asn-728. The span at 877–887 (PSLSHSGNRQR) shows a compositional bias: polar residues. The tract at residues 877–900 (PSLSHSGNRQRPPSGAGLAPPERM) is disordered. Asn-939 is a glycosylation site (N-linked (GlcNAc...) asparagine). A helical membrane pass occupies residues 1000–1022 (QTIPVFAFLGAMVALAFFVVQIS). Residues 1023–1052 (KAKSRPKRRRPRAKRPQLTQQTHPPRTPSV) lie on the Cytoplasmic side of the membrane. Positions 1025-1037 (KSRPKRRRPRAKR) are enriched in basic residues. Positions 1025–1052 (KSRPKRRRPRAKRPQLTQQTHPPRTPSV) are disordered.

The protein belongs to the peptidase S8 family. Ca(2+) serves as cofactor. Post-translationally, the 148 kDa zymogen is processed progressively into two membrane-bound 120 and 106 kDa forms in the endoplasmic reticulum, and late into a secreted 98 kDa form. The propeptide is autocatalytically removed through an intramolecular cleavage after Leu-186. Further cleavage generates 14, 10, and 8 kDa intermediates.

The protein resides in the endoplasmic reticulum membrane. Its subcellular location is the golgi apparatus membrane. The enzyme catalyses Processes precursors containing basic and hydrophobic/aliphatic residues at P4 and P2, respectively, with a relatively relaxed acceptance of amino acids at P1 and P3.. Inhibited by divalent copper and zinc ions, but not by nickel or cobalt. Inhibited by its prosegment, but not smaller fragments. Inhibited by 4-(2-aminoethyl)benzenesulfonyl fluoride (AEBSF), a serine protease inhibitor. Serine protease that cleaves after hydrophobic or small residues, provided that Arg or Lys is in position P4: known substrates include SREBF1/SREBP1, SREBF2/SREBP2, BDNF, GNPTAB, ATF6, ATF6B and FAM20C. Cleaves substrates after Arg-Ser-Val-Leu (SREBP2), Arg-His-Leu-Leu (ATF6), Arg-Gly-Leu-Thr (BDNF) and its own propeptide after Arg-Arg-Leu-Leu. Catalyzes the first step in the proteolytic activation of the sterol regulatory element-binding proteins (SREBPs) SREBF1/SREBP1 and SREBF2/SREBP2. Also mediates the first step in the proteolytic activation of the cyclic AMP-dependent transcription factor ATF-6 (ATF6 and ATF6B). Mediates the protein cleavage of GNPTAB into subunit alpha and beta, thereby participating in biogenesis of lysosomes. Cleaves the propeptide from FAM20C which is required for FAM20C secretion from the Golgi apparatus membrane and for enhancement of FAM20C kinase activity, promoting osteoblast differentiation and biomineralization. Involved in the regulation of M6P-dependent Golgi-to-lysosome trafficking of lysosomal enzymes. It is required for the activation of CREB3L2/BBF2H7, a transcriptional activator of MIA3/TANGO and other genes controlling mega vesicle formation. Therefore, it plays a key role in the regulation of mega vesicle-mediated collagen trafficking. In astrocytes and osteoblasts, upon DNA damage and ER stress, mediates the first step of the regulated intramembrane proteolytic activation of the transcription factor CREB3L1, leading to the inhibition of cell-cycle progression. The sequence is that of Membrane-bound transcription factor site-1 protease from Cricetulus griseus (Chinese hamster).